The primary structure comprises 349 residues: Core protein VP7 (349 aa).

The N-linked (GlcNAc...) asparagine; by host glycan is linked to asparagine 287.

The protein belongs to the orbivirus VP7 family. Homotrimer that assemble in a complex of 260 capsomers on an inner scaffold composed of VP3.

It localises to the virion. In terms of biological role, the VP7 protein is one of the five proteins (with VP1, VP3, VP4, and VP6) which form the inner capsid of the virus. In Bluetongue virus 1 (isolate Australia) (BTV 1), this protein is Core protein VP7 (Segment-7).